The chain runs to 418 residues: S-adenosylmethionine synthase (418 aa).

Residue histidine 16 participates in ATP binding. Mg(2+) is bound at residue aspartate 18. Glutamate 44 provides a ligand contact to K(+). Glutamate 57 and glutamine 100 together coordinate L-methionine. Residues 100–110 (QSPDIAQGVDS) are flexible loop. Residues 174–176 (DGK), aspartate 259, 265–266 (RK), alanine 282, and lysine 286 contribute to the ATP site. Aspartate 259 is a binding site for L-methionine. Residue lysine 290 coordinates L-methionine.

Belongs to the AdoMet synthase family. Homotetramer; dimer of dimers. Mg(2+) serves as cofactor. The cofactor is K(+).

Its subcellular location is the cytoplasm. The enzyme catalyses L-methionine + ATP + H2O = S-adenosyl-L-methionine + phosphate + diphosphate. It functions in the pathway amino-acid biosynthesis; S-adenosyl-L-methionine biosynthesis; S-adenosyl-L-methionine from L-methionine: step 1/1. In terms of biological role, catalyzes the formation of S-adenosylmethionine (AdoMet) from methionine and ATP. The overall synthetic reaction is composed of two sequential steps, AdoMet formation and the subsequent tripolyphosphate hydrolysis which occurs prior to release of AdoMet from the enzyme. The chain is S-adenosylmethionine synthase from Acaryochloris marina (strain MBIC 11017).